An 844-amino-acid chain; its full sequence is Nitrogen permease regulator 3 (844 aa).

A signal peptide spans 1–21 (MSTNLPNSCLVQIALTVSTHS). Disordered regions lie at residues 53 to 113 (EYTD…TFIN) and 246 to 310 (GRWK…DYEP). Low complexity predominate over residues 57–94 (SENNSSSDDYSSGLSDSELSTDYADCSSDASESSLDSL). A compositionally biased stretch (polar residues) spans 103 to 113 (VNSSTNNTFIN). The segment covering 246–262 (GRWKKSKKRKQASKRSA) has biased composition (basic residues). Positions 263–273 (RSSTARNSISR) are enriched in low complexity. Residues 274–293 (NSVGRNSIGRNRSKTESQGH) show a composition bias toward polar residues. Over residues 297–307 (VEEPADDENSD) the composition is skewed to acidic residues.

This sequence belongs to the NPR3 family.

Mediates inactivation of the TORC1 complex in response to amino acid starvation. Required for meiotic nuclear division. The sequence is that of Nitrogen permease regulator 3 (NPR3) from Kluyveromyces lactis (strain ATCC 8585 / CBS 2359 / DSM 70799 / NBRC 1267 / NRRL Y-1140 / WM37) (Yeast).